The chain runs to 321 residues: Meiotic drive suppressor wtf26 (321 aa).

The tract at residues 29-68 (GLLPEYNSEEEGALPTYSDHARSSNPPNTHRENHSSGTTD) is disordered. 6 helical membrane passes run 73–93 (FLIK…LAVC), 110–130 (WTLF…LTYF), 151–171 (EMMI…FGCV), 188–208 (TISA…WTLW), 210–230 (ALSG…LVNG), and 243–263 (GYEI…LYEM).

Belongs to the WTF family. Homomer. Interacts with other proteins that exhibit high sequence similarity.

Its subcellular location is the spore membrane. The protein resides in the vacuole membrane. Acts as a suppressor component of the dual wtf meiotic drive system, and can suppress but not confer meiotic drive by compatible poisons. Wtf meiotic drive systems promote unequal transmission of alleles from the parental zygote to progeny spores by encoding a poison and an antidote from the same locus; the poison is trans-acting and forms toxic aggregates in all spores within an ascus, wherease the antidote is spore-specific and targets aggregates for degradation by the vacuole. Meiotic drive by wtf systems therefore lead to poisoning of all progeny that do not inherit the dual poison/antidote allele, or express a compatible antidote. This is Meiotic drive suppressor wtf26 from Schizosaccharomyces kambucha (Fission yeast).